Reading from the N-terminus, the 475-residue chain is tRNA modification GTPase MnmE (475 aa).

R24, E81, and K124 together coordinate (6S)-5-formyl-5,6,7,8-tetrahydrofolate. One can recognise a TrmE-type G domain in the interval 220-397 (GLSVVLAGQP…MRSELLRLIG (178 aa)). Residue N230 coordinates K(+). Residues 230–235 (NVGKSS), 249–255 (TPIAGTT), 274–277 (DTAG), and 378–380 (SAR) each bind GTP. Residue S234 participates in Mg(2+) binding. Residues T249, I251, and T254 each coordinate K(+). T255 serves as a coordination point for Mg(2+). K475 serves as a coordination point for (6S)-5-formyl-5,6,7,8-tetrahydrofolate.

Belongs to the TRAFAC class TrmE-Era-EngA-EngB-Septin-like GTPase superfamily. TrmE GTPase family. As to quaternary structure, homodimer. Heterotetramer of two MnmE and two MnmG subunits. Requires K(+) as cofactor.

The protein localises to the cytoplasm. Exhibits a very high intrinsic GTPase hydrolysis rate. Involved in the addition of a carboxymethylaminomethyl (cmnm) group at the wobble position (U34) of certain tRNAs, forming tRNA-cmnm(5)s(2)U34. The chain is tRNA modification GTPase MnmE from Cupriavidus metallidurans (strain ATCC 43123 / DSM 2839 / NBRC 102507 / CH34) (Ralstonia metallidurans).